We begin with the raw amino-acid sequence, 340 residues long: Oxygen-dependent coproporphyrinogen-III oxidase (340 aa).

Residues M1–S14 are compositionally biased toward polar residues. The tract at residues M1–Q22 is disordered. A substrate-binding site is contributed by S109. A divalent metal cation is bound by residues H113 and H123. Residue H123 is the Proton donor of the active site. Residue N125–R127 coordinates substrate. Residues H157 and H187 each coordinate a divalent metal cation. An important for dimerization region spans residues Y278 to Q313. A substrate-binding site is contributed by N296–R298.

Belongs to the aerobic coproporphyrinogen-III oxidase family. In terms of assembly, homodimer. A divalent metal cation serves as cofactor.

The protein resides in the cytoplasm. It catalyses the reaction coproporphyrinogen III + O2 + 2 H(+) = protoporphyrinogen IX + 2 CO2 + 2 H2O. It participates in porphyrin-containing compound metabolism; protoporphyrin-IX biosynthesis; protoporphyrinogen-IX from coproporphyrinogen-III (O2 route): step 1/1. In terms of biological role, involved in the heme and chlorophyll biosynthesis. Catalyzes the aerobic oxidative decarboxylation of propionate groups of rings A and B of coproporphyrinogen-III to yield the vinyl groups in protoporphyrinogen-IX. This Synechocystis sp. (strain ATCC 27184 / PCC 6803 / Kazusa) protein is Oxygen-dependent coproporphyrinogen-III oxidase.